A 367-amino-acid polypeptide reads, in one-letter code: Histidinol-phosphate aminotransferase 1 (367 aa).

Lys226 carries the post-translational modification N6-(pyridoxal phosphate)lysine.

Belongs to the class-II pyridoxal-phosphate-dependent aminotransferase family. Histidinol-phosphate aminotransferase subfamily. Homodimer. Requires pyridoxal 5'-phosphate as cofactor.

It carries out the reaction L-histidinol phosphate + 2-oxoglutarate = 3-(imidazol-4-yl)-2-oxopropyl phosphate + L-glutamate. The protein operates within amino-acid biosynthesis; L-histidine biosynthesis; L-histidine from 5-phospho-alpha-D-ribose 1-diphosphate: step 7/9. The protein is Histidinol-phosphate aminotransferase 1 (hisC1) of Haemophilus influenzae (strain ATCC 51907 / DSM 11121 / KW20 / Rd).